The following is a 430-amino-acid chain: DNA damage-inducible protein DIN7 (430 aa).

Residues 1 to 96 (MGIPGLLPQL…HTETRRRKKR (96 aa)) form an N-domain region. The Mg(2+) site is built by Asp30, Asp78, Glu150, Asp152, Asp171, Asp173, and Asp227. The I-domain stretch occupies residues 114 to 247 (NAMEYFQKSV…VTAMKIVKRY (134 aa)).

Belongs to the XPG/RAD2 endonuclease family. The cofactor is Mg(2+).

It is found in the nucleus. In terms of biological role, 5'-&gt;3' double-stranded DNA exonuclease. The sequence is that of DNA damage-inducible protein DIN7 (DIN7) from Saccharomyces cerevisiae (strain ATCC 204508 / S288c) (Baker's yeast).